Consider the following 593-residue polypeptide: DEAD-box ATP-dependent RNA helicase 18 (593 aa).

The short motif at 16–44 (FSDLEPPLSGDIIEALNQSDFEFCTPVQA) is the Q motif element. A Helicase ATP-binding domain is found at 47–226 (IPLLCSYKDV…KAGLRNPVRV (180 aa)). 60–67 (AATGSGKT) contributes to the ATP binding site. Positions 174-177 (DEAD) match the DEAD box motif. Residues 264 to 411 (QLVDLLIKNS…ERKCSEDASD (148 aa)) enclose the Helicase C-terminal domain. Over residues 506–524 (QRQQNLQVRKEKRQEEKKE) the composition is skewed to basic and acidic residues. The interval 506 to 561 (QRQQNLQVRKEKRQEEKKEKGKRKRVDASASNDPKKASRKLTGKQRQTIQTAEDEE) is disordered.

Belongs to the DEAD box helicase family. DDX55/SPB4 subfamily.

The catalysed reaction is ATP + H2O = ADP + phosphate + H(+). The sequence is that of DEAD-box ATP-dependent RNA helicase 18 (RH18) from Arabidopsis thaliana (Mouse-ear cress).